Consider the following 418-residue polypeptide: MDQYEILGALGKGSFGVVSKIKRKEDGRVLVWKEICYENMQEKEKQLLVNEVNILQKLKHQNIVRYYDRIIDKPSSRLYIIMEHCSGGDLSQLIKKCRNERTYMDEEVIWRTLLQILSALQEIHNRKDGVILHRDIKPGNLFLDENKNIKLGDFGLAKILNESLYAHTFVGTPYYMSPEQIHGLKYNERSDVWSVGCLIYEMATLSPPFEATNQAQLTSKIQVGRYNPIPSQYSEHLSKVISLMINVDPKSRPNVNELLGYSFISFKVKERKLNIYYQGLKQMDEDLKIKEKKLSDIERDLQVKEQHLLLREQQINQREKLLLDKENFETQSRINIMNQQLQQQQQNQLQHQISNLSLNCNNSVNSCSSSSNNNTTNSINTQQQIHIQHNTQQQQQQQQTFQPYQIKRTFTTPLPNFK.

Residues 4-264 (YEILGALGKG…VNELLGYSFI (261 aa)) enclose the Protein kinase domain. ATP is bound by residues 10–18 (LGKGSFGVV) and K33. Residue D135 is the Proton acceptor of the active site. The stretch at 278–363 (QGLKQMDEDL…SNLSLNCNNS (86 aa)) forms a coiled coil.

It belongs to the protein kinase superfamily. NEK Ser/Thr protein kinase family. NIMA subfamily.

The catalysed reaction is L-seryl-[protein] + ATP = O-phospho-L-seryl-[protein] + ADP + H(+). The enzyme catalyses L-threonyl-[protein] + ATP = O-phospho-L-threonyl-[protein] + ADP + H(+). Its function is as follows. Involved in centrosome biogenesis. Seems to be required for recruitment of centrosomal material and might be involved in de novo centrosome formation. The chain is Probable serine/threonine-protein kinase nek2 (nek2) from Dictyostelium discoideum (Social amoeba).